Here is a 129-residue protein sequence, read N- to C-terminus: Glycine cleavage system H protein (129 aa).

Residues 24-106 (LVRVGISAFA…HGEGWLLVVR (83 aa)) form the Lipoyl-binding domain. K65 is subject to N6-lipoyllysine.

It belongs to the GcvH family. In terms of assembly, the glycine cleavage system is composed of four proteins: P, T, L and H. It depends on (R)-lipoate as a cofactor.

Its function is as follows. The glycine cleavage system catalyzes the degradation of glycine. The H protein shuttles the methylamine group of glycine from the P protein to the T protein. This chain is Glycine cleavage system H protein, found in Prochlorococcus marinus (strain MIT 9303).